Consider the following 309-residue polypeptide: Aspartate carbamoyltransferase catalytic subunit (309 aa).

Positions 58 and 59 each coordinate carbamoyl phosphate. Lys86 provides a ligand contact to L-aspartate. Carbamoyl phosphate is bound by residues Arg108, His136, and Gln139. 2 residues coordinate L-aspartate: Arg169 and Arg223. Carbamoyl phosphate is bound by residues Gly265 and Pro266.

Belongs to the aspartate/ornithine carbamoyltransferase superfamily. ATCase family. Heterododecamer (2C3:3R2) of six catalytic PyrB chains organized as two trimers (C3), and six regulatory PyrI chains organized as three dimers (R2).

It catalyses the reaction carbamoyl phosphate + L-aspartate = N-carbamoyl-L-aspartate + phosphate + H(+). It functions in the pathway pyrimidine metabolism; UMP biosynthesis via de novo pathway; (S)-dihydroorotate from bicarbonate: step 2/3. Functionally, catalyzes the condensation of carbamoyl phosphate and aspartate to form carbamoyl aspartate and inorganic phosphate, the committed step in the de novo pyrimidine nucleotide biosynthesis pathway. This is Aspartate carbamoyltransferase catalytic subunit from Akkermansia muciniphila (strain ATCC BAA-835 / DSM 22959 / JCM 33894 / BCRC 81048 / CCUG 64013 / CIP 107961 / Muc).